A 237-amino-acid chain; its full sequence is Purine nucleoside phosphorylase DeoD-type (237 aa).

An a purine D-ribonucleoside-binding site is contributed by H4. Phosphate is bound by residues G20, R24, R43, and 87-90 (RVGT). Residues 179–181 (EME) and 203–204 (SD) each bind a purine D-ribonucleoside. The Proton donor role is filled by D204.

The protein belongs to the PNP/UDP phosphorylase family. As to quaternary structure, homohexamer; trimer of homodimers.

It carries out the reaction a purine D-ribonucleoside + phosphate = a purine nucleobase + alpha-D-ribose 1-phosphate. It catalyses the reaction a purine 2'-deoxy-D-ribonucleoside + phosphate = a purine nucleobase + 2-deoxy-alpha-D-ribose 1-phosphate. In terms of biological role, catalyzes the reversible phosphorolytic breakdown of the N-glycosidic bond in the beta-(deoxy)ribonucleoside molecules, with the formation of the corresponding free purine bases and pentose-1-phosphate. The polypeptide is Purine nucleoside phosphorylase DeoD-type (Streptococcus gordonii (strain Challis / ATCC 35105 / BCRC 15272 / CH1 / DL1 / V288)).